A 369-amino-acid polypeptide reads, in one-letter code: MRIEAAELRILELPLKFRFETSFGVQTKRTILLLRLFGEGLEGLGEGVMERLPLYREETVAGARYLLEEVFLPRVLGRDLPNPEALREALAPFRGNPMAKAVLEMAFFDLWAKALGRPLWQVLGGVRQAVEVGVSLGIQPSVEDTLRVVERHLEEGYRRIKLKIKPGWDYEVLKAVREAFPEATLTADANSAYSLANLAQLKRLDELRLDYIEQPLAYDDLLDHAKLQRELSTPICLDESLTGAEKARKAIELGAGRVFNVKPARLGGHGESLRVHALAESAGIPLWMGGMLEAGVGRAHNLHLATLPGFTKPGDVSSASRYWEEDIVEEALEAKDGLMPVPEGVGIGVHLKLPFVERVTLWQRYMSAS.

The active-site Proton donor is the Lys163. The Mg(2+) site is built by Asp188, Glu213, and Asp238. Lys262 functions as the Proton acceptor in the catalytic mechanism.

The protein belongs to the mandelate racemase/muconate lactonizing enzyme family. MenC type 2 subfamily. Homooctamer. Tetramer of dimers. It depends on a divalent metal cation as a cofactor.

It catalyses the reaction (1R,6R)-6-hydroxy-2-succinyl-cyclohexa-2,4-diene-1-carboxylate = 2-succinylbenzoate + H2O. In terms of biological role, acts as a N-succinylamino acid racemase (NSAR) that catalyzes the racemization of N-succinyl-L-phenylglycine. Also converts 2-succinyl-6-hydroxy-2,4-cyclohexadiene-1-carboxylate (SHCHC) to 2-succinylbenzoate (OSB). Catalyzes both N-succinylamino acid racemization and OSB synthesis at equivalent rates. However, NSAR activity is probably the protein's biological function, because menaquinone biosynthesis genes are missing in this species. The polypeptide is N-succinylamino acid racemase (Thermus thermophilus (strain ATCC 27634 / DSM 579 / HB8)).